We begin with the raw amino-acid sequence, 630 residues long: Transposase B from transposon PsiTn554 (630 aa).

The Core-binding (CB) domain occupies 216–302; sequence TYFKQLVKRY…ILEGLFSTLH (87 aa). The Tyr recombinase domain maps to 326–513; that stretch reads AKPRFIDEFV…FDETLKNEFT (188 aa). Residues arginine 363, lysine 391, histidine 465, arginine 468, and histidine 491 contribute to the active site. Catalysis depends on tyrosine 500, which acts as the O-(3'-phospho-DNA)-tyrosine intermediate.

Belongs to the 'phage' integrase family.

This is Transposase B from transposon PsiTn554 (tnpB) from Staphylococcus aureus.